The following is a 161-amino-acid chain: Nucleotide-binding protein Shew185_3601 (161 aa).

Belongs to the YajQ family.

Nucleotide-binding protein. The polypeptide is Nucleotide-binding protein Shew185_3601 (Shewanella baltica (strain OS185)).